Reading from the N-terminus, the 67-residue chain is Small ribosomal subunit protein bS21 (67 aa).

Belongs to the bacterial ribosomal protein bS21 family.

This chain is Small ribosomal subunit protein bS21, found in Oleidesulfovibrio alaskensis (strain ATCC BAA-1058 / DSM 17464 / G20) (Desulfovibrio alaskensis).